A 297-amino-acid polypeptide reads, in one-letter code: Ribosomal RNA small subunit methyltransferase A (297 aa).

Asparagine 31, leucine 33, glycine 58, glutamate 79, aspartate 104, and asparagine 129 together coordinate S-adenosyl-L-methionine.

Belongs to the class I-like SAM-binding methyltransferase superfamily. rRNA adenine N(6)-methyltransferase family. RsmA subfamily.

The protein localises to the cytoplasm. The catalysed reaction is adenosine(1518)/adenosine(1519) in 16S rRNA + 4 S-adenosyl-L-methionine = N(6)-dimethyladenosine(1518)/N(6)-dimethyladenosine(1519) in 16S rRNA + 4 S-adenosyl-L-homocysteine + 4 H(+). In terms of biological role, specifically dimethylates two adjacent adenosines (A1518 and A1519) in the loop of a conserved hairpin near the 3'-end of 16S rRNA in the 30S particle. May play a critical role in biogenesis of 30S subunits. The protein is Ribosomal RNA small subunit methyltransferase A of Staphylococcus aureus (strain MRSA252).